The primary structure comprises 542 residues: Protein lin-9 homolog (542 aa).

Ala2 bears the N-acetylalanine mark. Residue Lys21 forms a Glycyl lysine isopeptide (Lys-Gly) (interchain with G-Cter in SUMO2) linkage. Residues Ser65 and Ser95 each carry the phosphoserine modification. Phosphothreonine occurs at positions 96 and 304. Phosphoserine occurs at positions 309 and 321.

This sequence belongs to the lin-9 family. In terms of assembly, component of the DREAM complex (also named LINC complex) at least composed of E2F4, E2F5, LIN9, LIN37, LIN52, LIN54, MYBL1, MYBL2, RBL1, RBL2, RBBP4, TFDP1 and TFDP2. The complex exists in quiescent cells where it represses cell cycle-dependent genes. It dissociates in S phase when LIN9, LIN37, LIN52 and LIN54 form a subcomplex that binds to MYBL2. Interacts with RB1.

It is found in the nucleus. The protein resides in the nucleoplasm. Acts as a tumor suppressor. Inhibits DNA synthesis. Its ability to inhibit oncogenic transformation is mediated through its association with RB1. Plays a role in the expression of genes required for the G1/S transition. The chain is Protein lin-9 homolog (Lin9) from Mus musculus (Mouse).